A 117-amino-acid polypeptide reads, in one-letter code: Ribosome-binding factor A (117 aa).

This sequence belongs to the RbfA family. Monomer. Binds 30S ribosomal subunits, but not 50S ribosomal subunits or 70S ribosomes.

The protein resides in the cytoplasm. Its function is as follows. One of several proteins that assist in the late maturation steps of the functional core of the 30S ribosomal subunit. Associates with free 30S ribosomal subunits (but not with 30S subunits that are part of 70S ribosomes or polysomes). Required for efficient processing of 16S rRNA. May interact with the 5'-terminal helix region of 16S rRNA. This chain is Ribosome-binding factor A, found in Nitrosomonas eutropha (strain DSM 101675 / C91 / Nm57).